The primary structure comprises 790 residues: Choline transporter-like 2 (790 aa).

The chain crosses the membrane as a helical span at residues 47–67 (PCLFLFVTFLCAWGYVAYYAV). N-linked (GlcNAc...) asparagine glycans are attached at residues Asn-102 and Asn-259. The next 3 membrane-spanning stretches (helical) occupy residues 288–308 (IITP…FQMI), 319–339 (ILVF…MLRW), and 344–364 (LVWI…YYSF). A glycan (N-linked (GlcNAc...) asparagine) is linked at Asn-384. Transmembrane regions (helical) follow at residues 400–420 (LWIL…VLVL) and 449–469 (LVPW…LLFL). Asn-483 carries an N-linked (GlcNAc...) asparagine glycan. 4 helical membrane-spanning segments follow: residues 545–565 (VIGF…VLAF), 592–612 (VYYH…CKII), 691–711 (VTGF…AAVT), and 728–748 (FVPA…FFSV).

The protein belongs to the CTL (choline transporter-like) family.

It localises to the membrane. This chain is Choline transporter-like 2, found in Anopheles gambiae (African malaria mosquito).